The chain runs to 156 residues: Small ribosomal subunit protein uS7 (156 aa).

The protein belongs to the universal ribosomal protein uS7 family. Part of the 30S ribosomal subunit. Contacts proteins S9 and S11.

Functionally, one of the primary rRNA binding proteins, it binds directly to 16S rRNA where it nucleates assembly of the head domain of the 30S subunit. Is located at the subunit interface close to the decoding center, probably blocks exit of the E-site tRNA. The sequence is that of Small ribosomal subunit protein uS7 from Cellvibrio japonicus (strain Ueda107) (Pseudomonas fluorescens subsp. cellulosa).